The primary structure comprises 400 residues: Mu-type opioid receptor (400 aa).

The Extracellular portion of the chain corresponds to 1-68 (MDSSAVPTNA…CPPTGSPSMI (68 aa)). N-linked (GlcNAc...) asparagine glycans are attached at residues Asn-9, Asn-12, Asn-33, Asn-40, and Asn-48. The helical transmembrane segment at 69–93 (TAITIMALYSIVCVVGLFGNFLVMY) threads the bilayer. At 94 to 106 (VIVRYTKMKTATN) the chain is on the cytoplasmic side. Residues 107–131 (IYIFNLALADALVTSTLPFQSVNYL) traverse the membrane as a helical segment. At 132–142 (MGTWPFGTILC) the chain is on the extracellular side. Cysteines 142 and 219 form a disulfide. The chain crosses the membrane as a helical span at residues 143-165 (KIVISIDYYNMSTSIFTLCTMSV). Residues 166 to 185 (DRYIAVCHPVKALDFRTPRN) are Cytoplasmic-facing. Tyr-168 bears the Phosphotyrosine mark. A helical membrane pass occupies residues 186–207 (AKIINVCNWILSSAIGLPVMFM). At 208–230 (ATTKYRQGSIDCTLTFSHPSWYW) the chain is on the extracellular side. A helical transmembrane segment spans residues 231-255 (ENLLKICVFIFAFIMPVLIITVCYG). The Cytoplasmic segment spans residues 256-283 (LMILRLKSVRMLSGSKEKDRNLRRITRM). The helical transmembrane segment at 284-306 (VLVVVAVFIICWTPIHIYVIIKA) threads the bilayer. Residues 307–314 (LVTIPETT) lie on the Extracellular side of the membrane. A helical membrane pass occupies residues 315 to 338 (FQTVSWHFCIALGYTNSCLNPVLY). The NPxxY; plays a role in stabilizing the activated conformation of the receptor signature appears at 334–338 (NPVLY). The Cytoplasmic portion of the chain corresponds to 339–400 (AFLDEDFKRC…NLEAETAPLP (62 aa)). The S-palmitoyl cysteine moiety is linked to residue Cys-353. The tract at residues 364–386 (NSTRIRQNTRDHPSTANTVDRTN) is disordered. Phosphoserine is present on Ser-365. Thr-372 bears the Phosphothreonine mark. At Ser-377 the chain carries Phosphoserine. Phosphothreonine is present on Thr-396.

This sequence belongs to the G-protein coupled receptor 1 family. Forms homooligomers and heterooligomers with other GPCRs, such as OPRD1, OPRK1, OPRL1, NPFFR2, ADRA2A, SSTR2, CNR1 and CCR5 (probably in dimeric forms). Interacts with heterotrimeric G proteins; interaction with a heterotrimeric complex containing GNAI1, GNB1 and GNG2 stabilizes the active conformation of the receptor and increases its affinity for endomorphin-2, the synthetic opioid peptide DAMGO and for morphinan agonists. Interacts with PPL; the interaction disrupts agonist-mediated G-protein activation. Interacts (via C-terminus) with DNAJB4 (via C-terminus). Interacts with calmodulin; the interaction inhibits the constitutive activity of OPRM1; it abolishes basal and attenuates agonist-stimulated G-protein coupling. Interacts with FLNA, PLD2, RANBP9 and WLS and GPM6A. Interacts with RTP4. Interacts with SYP and GNAS. Interacts with RGS9, RGS17, RGS20, RGS4, PPP1R9B and HINT1. Phosphorylated. Differentially phosphorylated in basal and agonist-induced conditions. Agonist-mediated phosphorylation modulates receptor internalization. Phosphorylated by GRK2 in a agonist-dependent manner. Phosphorylation at Tyr-168 requires receptor activation, is dependent on non-receptor protein tyrosine kinase Src and results in a decrease in agonist efficacy by reducing G-protein coupling efficiency. Phosphorylated on tyrosine residues; the phosphorylation is involved in agonist-induced G-protein-independent receptor down-regulation. Phosphorylation at Ser-377 is involved in G-protein-dependent but not beta-arrestin-dependent activation of the ERK pathway. In terms of processing, ubiquitinated. A basal ubiquitination seems not to be related to degradation. Ubiquitination is increased upon formation of OPRM1:OPRD1 oligomers leading to proteasomal degradation; the ubiquitination is diminished by RTP4.

The protein localises to the cell membrane. The protein resides in the cell projection. It localises to the axon. It is found in the perikaryon. Its subcellular location is the dendrite. The protein localises to the endosome. In terms of biological role, receptor for endogenous opioids such as beta-endorphin and endomorphin. Receptor for natural and synthetic opioids including morphine, heroin, DAMGO, fentanyl, etorphine, buprenorphin and methadone. Also activated by enkephalin peptides, such as Met-enkephalin or Met-enkephalin-Arg-Phe, with higher affinity for Met-enkephalin-Arg-Phe. Agonist binding to the receptor induces coupling to an inactive GDP-bound heterotrimeric G-protein complex and subsequent exchange of GDP for GTP in the G-protein alpha subunit leading to dissociation of the G-protein complex with the free GTP-bound G-protein alpha and the G-protein beta-gamma dimer activating downstream cellular effectors. The agonist- and cell type-specific activity is predominantly coupled to pertussis toxin-sensitive G(i) and G(o) G alpha proteins, GNAI1, GNAI2, GNAI3 and GNAO1, and to a lesser extent to pertussis toxin-insensitive G alpha proteins GNAZ and GNA15. They mediate an array of downstream cellular responses, including inhibition of adenylate cyclase activity and both N-type and L-type calcium channels, activation of inward rectifying potassium channels, mitogen-activated protein kinase (MAPK), phospholipase C (PLC), phosphoinositide/protein kinase (PKC), phosphoinositide 3-kinase (PI3K) and regulation of NF-kappa-B. Also couples to adenylate cyclase stimulatory G alpha proteins. The selective temporal coupling to G-proteins and subsequent signaling can be regulated by RGSZ proteins, such as RGS9, RGS17 and RGS4. Phosphorylation by members of the GPRK subfamily of Ser/Thr protein kinases and association with beta-arrestins is involved in short-term receptor desensitization. Beta-arrestins associate with the GPRK-phosphorylated receptor and uncouple it from the G-protein thus terminating signal transduction. The phosphorylated receptor is internalized through endocytosis via clathrin-coated pits which involves beta-arrestins. The activation of the ERK pathway occurs either in a G-protein-dependent or a beta-arrestin-dependent manner and is regulated by agonist-specific receptor phosphorylation. Acts as a class A G-protein coupled receptor (GPCR) which dissociates from beta-arrestin at or near the plasma membrane and undergoes rapid recycling. Receptor down-regulation pathways are varying with the agonist and occur dependent or independent of G-protein coupling. Endogenous ligands induce rapid desensitization, endocytosis and recycling. Heterooligomerization with other GPCRs can modulate agonist binding, signaling and trafficking properties. Involved in neurogenesis. This Macaca mulatta (Rhesus macaque) protein is Mu-type opioid receptor (OPRM1).